A 176-amino-acid chain; its full sequence is Avian agnoprotein 1a (176 aa).

Disordered stretches follow at residues 1-85 and 116-176; these read MSTP…GKLE and VYAA…RPAR. Residues 75–85 are compositionally biased toward basic and acidic residues; it reads YDRQNRFGKLE. The stretch at 76–119 forms a coiled coil; the sequence is DRQNRFGKLESEIRETKSQLETLRQELKHLQADVDDLKETVYAA. The segment covering 137-161 has biased composition (low complexity); it reads TPTATTPEASPAAPTTESTETTGPS.

As to quaternary structure, interacts with VP1.

It localises to the virion. Its subcellular location is the host nucleus. The polypeptide is Avian agnoprotein 1a (Budgerigar fledgling disease virus (BFPyV)).